The primary structure comprises 201 residues: 3-isopropylmalate dehydratase small subunit (201 aa).

The protein belongs to the LeuD family. LeuD type 1 subfamily. Heterodimer of LeuC and LeuD.

It catalyses the reaction (2R,3S)-3-isopropylmalate = (2S)-2-isopropylmalate. The protein operates within amino-acid biosynthesis; L-leucine biosynthesis; L-leucine from 3-methyl-2-oxobutanoate: step 2/4. Functionally, catalyzes the isomerization between 2-isopropylmalate and 3-isopropylmalate, via the formation of 2-isopropylmaleate. The chain is 3-isopropylmalate dehydratase small subunit (leuD) from Thermus thermophilus (strain ATCC 27634 / DSM 579 / HB8).